Consider the following 553-residue polypeptide: Cysteine desulfurase IscS (553 aa).

A compositionally biased stretch (low complexity) spans 102 to 122 (NNISSNNTQYNNNSSNSGSLN). The disordered stretch occupies residues 102-125 (NNISSNNTQYNNNSSNSGSLNDEG).

This sequence belongs to the class-V pyridoxal-phosphate-dependent aminotransferase family. NifS/IscS subfamily. In terms of assembly, homotetramer. Interacts with Isd11; the interaction enhances cysteine desulfurase activity of IscS. Interacts with IscU. Component of a complex, at least composed of IscS, Isd11 and IscU. Pyridoxal 5'-phosphate is required as a cofactor.

The protein resides in the mitochondrion. The enzyme catalyses (sulfur carrier)-H + L-cysteine = (sulfur carrier)-SH + L-alanine. It participates in cofactor biosynthesis; iron-sulfur cluster biosynthesis. Catalyzes sulfur activation and mobilization in iron-sulfur cluster formation (ISC) pathway for iron-sulfur (Fe-S) cluster biogenesis. Active when in complex with a partner protein Isd11. This Plasmodium falciparum (isolate 3D7) protein is Cysteine desulfurase IscS.